The primary structure comprises 202 residues: ATP-dependent Clp protease proteolytic subunit (202 aa).

Ser106 serves as the catalytic Nucleophile. His131 is an active-site residue.

It belongs to the peptidase S14 family. As to quaternary structure, fourteen ClpP subunits assemble into 2 heptameric rings which stack back to back to give a disk-like structure with a central cavity, resembling the structure of eukaryotic proteasomes.

The protein resides in the cytoplasm. The catalysed reaction is Hydrolysis of proteins to small peptides in the presence of ATP and magnesium. alpha-casein is the usual test substrate. In the absence of ATP, only oligopeptides shorter than five residues are hydrolyzed (such as succinyl-Leu-Tyr-|-NHMec, and Leu-Tyr-Leu-|-Tyr-Trp, in which cleavage of the -Tyr-|-Leu- and -Tyr-|-Trp bonds also occurs).. In terms of biological role, cleaves peptides in various proteins in a process that requires ATP hydrolysis. Has a chymotrypsin-like activity. Plays a major role in the degradation of misfolded proteins. The sequence is that of ATP-dependent Clp protease proteolytic subunit from Verminephrobacter eiseniae (strain EF01-2).